Reading from the N-terminus, the 157-residue chain is Small ribosomal subunit protein uS7 (157 aa).

This sequence belongs to the universal ribosomal protein uS7 family. In terms of assembly, part of the 30S ribosomal subunit. Contacts proteins S9 and S11.

One of the primary rRNA binding proteins, it binds directly to 16S rRNA where it nucleates assembly of the head domain of the 30S subunit. Is located at the subunit interface close to the decoding center, probably blocks exit of the E-site tRNA. This is Small ribosomal subunit protein uS7 from Marinomonas sp. (strain MWYL1).